The primary structure comprises 479 residues: Sulfate adenylyltransferase subunit 1 (479 aa).

The tr-type G domain maps to 25 to 239 (KSLLRFLTCG…EVLETVDIQR (215 aa)). The tract at residues 34–41 (GSVDDGKS) is G1. Residue 34-41 (GSVDDGKS) participates in GTP binding. The segment at 92–96 (GITID) is G2. The G3 stretch occupies residues 113-116 (DTPG). GTP-binding positions include 113-117 (DTPGH) and 168-171 (NKMD). The segment at 168-171 (NKMD) is G4. The segment at 206-208 (SAL) is G5.

The protein belongs to the TRAFAC class translation factor GTPase superfamily. Classic translation factor GTPase family. CysN/NodQ subfamily. In terms of assembly, heterodimer composed of CysD, the smaller subunit, and CysN.

The catalysed reaction is sulfate + ATP + H(+) = adenosine 5'-phosphosulfate + diphosphate. Its pathway is sulfur metabolism; hydrogen sulfide biosynthesis; sulfite from sulfate: step 1/3. Its function is as follows. With CysD forms the ATP sulfurylase (ATPS) that catalyzes the adenylation of sulfate producing adenosine 5'-phosphosulfate (APS) and diphosphate, the first enzymatic step in sulfur assimilation pathway. APS synthesis involves the formation of a high-energy phosphoric-sulfuric acid anhydride bond driven by GTP hydrolysis by CysN coupled to ATP hydrolysis by CysD. The chain is Sulfate adenylyltransferase subunit 1 from Salmonella gallinarum (strain 287/91 / NCTC 13346).